Reading from the N-terminus, the 843-residue chain is Protein P (843 aa).

The tract at residues 1-177 (MPLSYQHFRK…FCGSPYSWEQ (177 aa)) is terminal protein domain (TP). Residues 178-346 (DLQHGRLVFQ…YCLCHIVNLI (169 aa)) are spacer. The interval 220–265 (QSRLGPQPAQGQLAGRQQGGSGSIRARVHPSPWGTVGVEPSGSGPT) is disordered. Low complexity predominate over residues 223–235 (LGPQPAQGQLAGR). Residues 347-690 (EDWGPCTEHG…YLNLYPVARQ (344 aa)) are polymerase/reverse transcriptase domain (RT). The region spanning 357–600 (EHLIRTPRTP…YSLNFMGYVI (244 aa)) is the Reverse transcriptase domain. The Mg(2+) site is built by D429, D551, and D552.

The protein belongs to the hepadnaviridae P protein family.

The enzyme catalyses DNA(n) + a 2'-deoxyribonucleoside 5'-triphosphate = DNA(n+1) + diphosphate. It catalyses the reaction Endonucleolytic cleavage to 5'-phosphomonoester.. With respect to regulation, activated by host HSP70 and HSP40 in vitro to be able to bind the epsilon loop of the pgRNA. Because deletion of the RNase H region renders the protein partly chaperone-independent, the chaperones may be needed indirectly to relieve occlusion of the RNA-binding site by this domain. Inhibited by several reverse-transcriptase inhibitors: Lamivudine, Adefovir and Entecavir. Multifunctional enzyme that converts the viral RNA genome into dsDNA in viral cytoplasmic capsids. This enzyme displays a DNA polymerase activity that can copy either DNA or RNA templates, and a ribonuclease H (RNase H) activity that cleaves the RNA strand of RNA-DNA heteroduplexes in a partially processive 3'- to 5'-endonucleasic mode. Neo-synthesized pregenomic RNA (pgRNA) are encapsidated together with the P protein, and reverse-transcribed inside the nucleocapsid. Initiation of reverse-transcription occurs first by binding the epsilon loop on the pgRNA genome, and is initiated by protein priming, thereby the 5'-end of (-)DNA is covalently linked to P protein. Partial (+)DNA is synthesized from the (-)DNA template and generates the relaxed circular DNA (RC-DNA) genome. After budding and infection, the RC-DNA migrates in the nucleus, and is converted into a plasmid-like covalently closed circular DNA (cccDNA). The activity of P protein does not seem to be necessary for cccDNA generation, and is presumably released from (+)DNA by host nuclear DNA repair machinery. The protein is Protein P of Hepatitis B virus genotype B2 (isolate Vietnam/9873/1997) (HBV-B).